We begin with the raw amino-acid sequence, 1212 residues long: DNA-directed RNA polymerase subunit beta'' (1212 aa).

Residues C229, C302, C309, and C312 each coordinate Zn(2+). Residues 1162–1212 (QKETSKNKKETSKNKKETSKNKKETSKNKKETSKNKKETSKNKKEASKNKK) form a disordered region.

The protein belongs to the RNA polymerase beta' chain family. RpoC2 subfamily. As to quaternary structure, in plastids the minimal PEP RNA polymerase catalytic core is composed of four subunits: alpha, beta, beta', and beta''. When a (nuclear-encoded) sigma factor is associated with the core the holoenzyme is formed, which can initiate transcription. The cofactor is Zn(2+).

It is found in the plastid. The protein localises to the chloroplast. The enzyme catalyses RNA(n) + a ribonucleoside 5'-triphosphate = RNA(n+1) + diphosphate. DNA-dependent RNA polymerase catalyzes the transcription of DNA into RNA using the four ribonucleoside triphosphates as substrates. The sequence is that of DNA-directed RNA polymerase subunit beta'' from Cryptomeria japonica (Japanese cedar).